Here is a 690-residue protein sequence, read N- to C-terminus: Xylosyl- and glucuronyltransferase LARGE2 (690 aa).

Residues 1–8 (MLPRGRPR) lie on the Cytoplasmic side of the membrane. The helical; Signal-anchor for type II membrane protein transmembrane segment at 9 to 29 (AMGAAVLLLLLLLVVGFFLFG) threads the bilayer. Residues 30–690 (RDPDYGLGTT…TALQQARSRA (661 aa)) lie on the Lumenal side of the membrane. N-linked (GlcNAc...) asparagine glycosylation is found at Asn51 and Asn78. A xylosyltransferase activity region spans residues 68 to 343 (LHVAIVCAGY…FLGYDGKLLR (276 aa)). Residues Asp172 and Asp174 each coordinate Mn(2+). N-linked (GlcNAc...) asparagine glycosylation is present at Asn202. The interval 344 to 686 (RELFGCPNQF…LKYLTALQQA (343 aa)) is glucuronyltransferase activity. Mn(2+) contacts are provided by Asp492 and Asp494.

The protein in the C-terminal section; belongs to the glycosyltransferase 49 family. In the N-terminal section; belongs to the glycosyltransferase 8 family. It belongs to the glycosyltransferase 8 family. In terms of assembly, interacts with B4GAT1. Mn(2+) serves as cofactor. As to expression, highly expressed in the testis and kidney, but weakly expressed in the heart and brain. Expressed during embryogenesis from 7 dpc.

It is found in the golgi apparatus membrane. It catalyses the reaction 3-O-[beta-D-GlcA-(1-&gt;3)-beta-D-Xyl-(1-&gt;4)-Rib-ol-P-Rib-ol-P-3-beta-D-GalNAc-(1-&gt;3)-beta-D-GlcNAc-(1-&gt;4)-(O-6-P-alpha-D-Man)]-Thr-[protein] + UDP-alpha-D-xylose = 3-O-[alpha-D-Xyl-(1-&gt;3)-beta-D-GlcA-(1-&gt;4)-beta-D-Xyl-(1-&gt;4)-Rib-ol-P-Rib-ol-P-3-beta-D-GalNAc-(1-&gt;3)-beta-D-GlcNAc-(1-&gt;4)-(O-6-P-alpha-D-Man)]-Thr-[protein] + UDP + H(+). The enzyme catalyses 3-O-{(1-&gt;[3)-alpha-D-Xyl-(1-&gt;3)-beta-D-GlcA-(1-&gt;](n)-4)-beta-D-Xyl-(1-&gt;4)-Rib-ol-P-Rib-ol-P-3-beta-D-GalNAc-(1-&gt;3)-beta-D-GlcNAc-(1-&gt;4)-O-6-P-alpha-D-Man}-L-Thr-[protein] + UDP-alpha-D-glucuronate = 3-O-{beta-D-GlcA-(1-&gt;[3)-alpha-D-Xyl-(1-&gt;3)-beta-D-GlcA-(1-&gt;](n)-4)-beta-D-Xyl-(1-&gt;4)-Rib-ol-P-Rib-ol-P-3-beta-D-GalNAc-(1-&gt;3)-beta-D-GlcNAc-(1-&gt;4)-O-6-P-alpha-D-Man}-L-Thr-[protein] + UDP + H(+). The catalysed reaction is 3-O-{beta-D-GlcA-(1-&gt;[3)-alpha-D-Xyl-(1-&gt;3)-beta-D-GlcA-(1-&gt;](n)-4)-beta-D-Xyl-(1-&gt;4)-Rib-ol-P-Rib-ol-P-3-beta-D-GalNAc-(1-&gt;3)-beta-D-GlcNAc-(1-&gt;4)-O-6-P-alpha-D-Man}-L-Thr-[protein] + UDP-alpha-D-xylose = 3-O-{(1-&gt;[3)-alpha-D-Xyl-(1-&gt;3)-beta-D-GlcA-(1-&gt;](n+1)-4)-beta-D-Xyl-(1-&gt;4)-Rib-ol-P-Rib-ol-P-3-beta-D-GalNAc-(1-&gt;3)-beta-D-GlcNAc-(1-&gt;4)-O-6-P-alpha-D-Man}-L-Thr-[protein] + UDP + H(+). The protein operates within protein modification; protein glycosylation. Functionally, bifunctional glycosyltransferase with both alpha-1,3-xylosyltransferase and beta-1,3-glucuronyltransferase activities involved in the maturation of alpha-dystroglycan (DAG1) by glycosylation leading to DAG1 binding to laminin G-like domain-containing extracellular proteins with high affinity and in a phosphorylated-O-mannosyl trisaccharide dependent manner. Elongates the glucuronyl-beta-1,4-xylose-beta disaccharide primer structure by adding repeating units [-3-Xylose-alpha-1,3-GlcA-beta-1-] to produce a heteropolysaccharide. Supports the maturation of DAG1 more effectively than LARGE1. In addition, can modify both heparan sulfate (HS)- and chondroitin/dermatan sulfate (CS/DS)-proteoglycans (PGs), namely GPC4, with a glycosaminoglycan (GAG)-like polysaccharide composed of xylose and glucuronic acid to confer laminin binding. The protein is Xylosyl- and glucuronyltransferase LARGE2 of Mus musculus (Mouse).